Consider the following 379-residue polypeptide: UDP-N-acetylglucosamine--N-acetylmuramyl-(pentapeptide) pyrophosphoryl-undecaprenol N-acetylglucosamine transferase (379 aa).

UDP-N-acetyl-alpha-D-glucosamine contacts are provided by residues 17-19 (TGG), Asn-128, Arg-169, Ser-197, and Gln-298.

This sequence belongs to the glycosyltransferase 28 family. MurG subfamily.

The protein resides in the cell inner membrane. It carries out the reaction di-trans,octa-cis-undecaprenyl diphospho-N-acetyl-alpha-D-muramoyl-L-alanyl-D-glutamyl-meso-2,6-diaminopimeloyl-D-alanyl-D-alanine + UDP-N-acetyl-alpha-D-glucosamine = di-trans,octa-cis-undecaprenyl diphospho-[N-acetyl-alpha-D-glucosaminyl-(1-&gt;4)]-N-acetyl-alpha-D-muramoyl-L-alanyl-D-glutamyl-meso-2,6-diaminopimeloyl-D-alanyl-D-alanine + UDP + H(+). The protein operates within cell wall biogenesis; peptidoglycan biosynthesis. Functionally, cell wall formation. Catalyzes the transfer of a GlcNAc subunit on undecaprenyl-pyrophosphoryl-MurNAc-pentapeptide (lipid intermediate I) to form undecaprenyl-pyrophosphoryl-MurNAc-(pentapeptide)GlcNAc (lipid intermediate II). The polypeptide is UDP-N-acetylglucosamine--N-acetylmuramyl-(pentapeptide) pyrophosphoryl-undecaprenol N-acetylglucosamine transferase (Brucella melitensis biotype 2 (strain ATCC 23457)).